We begin with the raw amino-acid sequence, 179 residues long: MIDDNIENNEQTINDIAEDIVETANPEITELKAEIEELKDKLIRTTAEIDNTRKRLEKARDEAKDYAIATFAKELLNVSDNLSRALAHKPANSDIEVTNIIAGVQMTKDELDKIFHKHHIEEIKPEIGSMFDYNLHNAISQIEHPDHAPNSIITLMQSGYKIRDRLLRPATVQVVKKSE.

This sequence belongs to the GrpE family. Homodimer.

It localises to the cytoplasm. In terms of biological role, participates actively in the response to hyperosmotic and heat shock by preventing the aggregation of stress-denatured proteins, in association with DnaK and GrpE. It is the nucleotide exchange factor for DnaK and may function as a thermosensor. Unfolded proteins bind initially to DnaJ; upon interaction with the DnaJ-bound protein, DnaK hydrolyzes its bound ATP, resulting in the formation of a stable complex. GrpE releases ADP from DnaK; ATP binding to DnaK triggers the release of the substrate protein, thus completing the reaction cycle. Several rounds of ATP-dependent interactions between DnaJ, DnaK and GrpE are required for fully efficient folding. The protein is Protein GrpE of Rickettsia felis (strain ATCC VR-1525 / URRWXCal2) (Rickettsia azadi).